The chain runs to 1266 residues: Formin-like protein 13 (1266 aa).

In terms of domain architecture, Phosphatase tensin-type spans 9–193 (YRKPPDGLLE…QYVSRRNLVS (185 aa)). The Phosphocysteine intermediate role is filled by C126. One can recognise a C2 tensin-type domain in the interval 199-337 (DRALTMDCVI…FRVELLFSDM (139 aa)). Disordered regions lie at residues 497–568 (KPLV…LQHS), 597–825 (KNLI…GKGR), 881–902 (SASAPEQAGKSRLDSSRGPKPE), and 1210–1266 (QLEA…RTAP). Over residues 529–538 (PPTPSPPHPV) the composition is skewed to pro residues. Positions 617–644 (EPSSKTTNSLLLSPQASPATPTNPSKTV) are enriched in polar residues. Composition is skewed to pro residues over residues 686–698 (LPRPPPPPPPPPM), 706–742 (VPPPPPPAPPAPPTPIVHTSSPPPPPPPPPPPAPPTP), 754–781 (PPAPPAPPRLPTHSASPPPPTAPPPPPL), and 806–815 (PNVPPTPALP). The FH2 domain occupies 829 to 1226 (VNLKNSPAKK…KNAAEKEKPK (398 aa)). 3 stretches are compositionally biased toward basic and acidic residues: residues 889-902 (GKSRLDSSRGPKPE), 1210-1248 (QLEAEAKKNAAEKEKPKTGGLDTEIKKPLNEEVKEEKTK), and 1255-1266 (EMSDRLKERTAP).

It belongs to the formin-like family. Class-II subfamily.

This is Formin-like protein 13 (FH13) from Arabidopsis thaliana (Mouse-ear cress).